Reading from the N-terminus, the 201-residue chain is Ribonuclease HII (201 aa).

Residues 12–201 enclose the RNase H type-2 domain; it reads DLVAGVDEVG…VRELLDVSVQ (190 aa). Residues Asp-18, Glu-19, and Asp-110 each contribute to the a divalent metal cation site.

The protein belongs to the RNase HII family. Requires Mn(2+) as cofactor. Mg(2+) is required as a cofactor.

The protein resides in the cytoplasm. The catalysed reaction is Endonucleolytic cleavage to 5'-phosphomonoester.. Functionally, endonuclease that specifically degrades the RNA of RNA-DNA hybrids. The protein is Ribonuclease HII of Pseudomonas aeruginosa (strain LESB58).